The chain runs to 323 residues: tRNA U34 carboxymethyltransferase (323 aa).

Carboxy-S-adenosyl-L-methionine is bound by residues Lys91, Trp105, Lys110, Gly130, 152–154 (DPT), 181–182 (IE), Met196, Tyr200, and Arg315.

This sequence belongs to the class I-like SAM-binding methyltransferase superfamily. CmoB family. As to quaternary structure, homotetramer.

It catalyses the reaction carboxy-S-adenosyl-L-methionine + 5-hydroxyuridine(34) in tRNA = 5-carboxymethoxyuridine(34) in tRNA + S-adenosyl-L-homocysteine + H(+). In terms of biological role, catalyzes carboxymethyl transfer from carboxy-S-adenosyl-L-methionine (Cx-SAM) to 5-hydroxyuridine (ho5U) to form 5-carboxymethoxyuridine (cmo5U) at position 34 in tRNAs. The protein is tRNA U34 carboxymethyltransferase of Salmonella gallinarum (strain 287/91 / NCTC 13346).